The following is a 319-amino-acid chain: Fiber protein (319 aa).

2 Shaft repeats span residues glycine 44–threonine 73 and isoleucine 82–leucine 103.

This sequence belongs to the adenoviridae fiber family. In terms of assembly, homotrimer. Interacts with host receptor CD46. Interacts (via N-terminal tail region) with pentons.

It is found in the virion. The protein localises to the host nucleus. Forms spikes that protrude from each vertex of the icosahedral capsid. Interacts with host receptor CD46 to provide virion initial attachment to target cell. Fiber proteins are shed during virus entry, when virus is still at the cell surface. Heparan sulfate might also play a role in virus binding. This Homo sapiens (Human) protein is Fiber protein.